Reading from the N-terminus, the 238-residue chain is tRNA (guanine-N(7)-)-methyltransferase (238 aa).

4 residues coordinate S-adenosyl-L-methionine: E70, D95, D122, and D145. D145 is a catalytic residue. Residues K149, D181, and 216 to 219 contribute to the substrate site; that span reads TKFE.

Belongs to the class I-like SAM-binding methyltransferase superfamily. TrmB family.

The enzyme catalyses guanosine(46) in tRNA + S-adenosyl-L-methionine = N(7)-methylguanosine(46) in tRNA + S-adenosyl-L-homocysteine. The protein operates within tRNA modification; N(7)-methylguanine-tRNA biosynthesis. In terms of biological role, catalyzes the formation of N(7)-methylguanine at position 46 (m7G46) in tRNA. The polypeptide is tRNA (guanine-N(7)-)-methyltransferase (Neisseria meningitidis serogroup B (strain ATCC BAA-335 / MC58)).